The chain runs to 327 residues: Immediate early response gene 5 protein (327 aa).

Disordered regions lie at residues 59-166 (GPAG…GVFP) and 227-313 (GPAG…DKPV). Over residues 71 to 84 (QPGEPAAGPPAGWG) the composition is skewed to low complexity. The span at 253–262 (GEDDDAEEME) shows a compositional bias: acidic residues. Positions 265-278 (NVANLISIFGSSFS) are enriched in polar residues.

This sequence belongs to the IER family. In terms of assembly, monomer. Homodimer. Associates with the catalytic subunit of protein phosphatase PP2A. Interacts (via N- and C-terminal regions) with PPP2R2B. Interacts with PPP2R2A, PPP2R2C and PPP2R2D. Interacts (via N-terminus) with RPS6KB1. Interacts (via central region) with HSF1; this interaction promotes PPP2CA-induced HSF1 dephosphorylation, leading to enhanced HSF1 transcriptional activity. As to expression, expressed in acute myeloid leukemia (AML) cells.

It is found in the nucleus. The protein resides in the cytoplasm. Functionally, plays a role as a transcription factor. Mediates positive transcriptional regulation of several chaperone genes during the heat shock response in a HSF1-dependent manner. Mediates negative transcriptional regulation of CDC25B expression. Plays a role in the dephosphorylation of the heat shock factor HSF1 and ribosomal protein S6 kinase (S6K) by the protein phosphatase PP2A. Involved in the regulation of cell proliferation and resistance to thermal stress. Involved in the cell cycle checkpoint and survival in response to ionizing radiation. Associates with chromatin to the CDC25B promoter. This chain is Immediate early response gene 5 protein (IER5), found in Homo sapiens (Human).